The sequence spans 206 residues: uncharacterized protein (206 aa).

A MurNAc-LAA domain is found at valine 32 to aspartate 201.

It belongs to the N-acetylmuramoyl-L-alanine amidase 3 family.

This is an uncharacterized protein from Bacillus subtilis (strain 168).